Reading from the N-terminus, the 254-residue chain is Alcohol dehydrogenase (254 aa).

10-33 (FVAGLGGIGLDTSRELVKRNLKNL) contacts NAD(+). Residue S138 coordinates substrate. The active-site Proton acceptor is the Y151.

The protein belongs to the short-chain dehydrogenases/reductases (SDR) family. As to quaternary structure, homodimer.

It catalyses the reaction a primary alcohol + NAD(+) = an aldehyde + NADH + H(+). The enzyme catalyses a secondary alcohol + NAD(+) = a ketone + NADH + H(+). This is Alcohol dehydrogenase (Adh) from Drosophila pseudoobscura pseudoobscura (Fruit fly).